The sequence spans 445 residues: Phosphoglucosamine mutase (445 aa).

Catalysis depends on serine 102, which acts as the Phosphoserine intermediate. Residues serine 102, aspartate 241, aspartate 243, and aspartate 245 each contribute to the Mg(2+) site. A Phosphoserine modification is found at serine 102.

Belongs to the phosphohexose mutase family. Mg(2+) serves as cofactor. Activated by phosphorylation.

It catalyses the reaction alpha-D-glucosamine 1-phosphate = D-glucosamine 6-phosphate. Its function is as follows. Catalyzes the conversion of glucosamine-6-phosphate to glucosamine-1-phosphate. The chain is Phosphoglucosamine mutase from Acinetobacter baumannii (strain ACICU).